We begin with the raw amino-acid sequence, 565 residues long: Probable peptidoglycan D,D-transpeptidase PbpC (565 aa).

Residues 10 to 30 (FILVVTLFVLASLAVSGRLVY) traverse the membrane as a helical segment. Ser-289 functions as the Acyl-ester intermediate in the catalytic mechanism.

The protein belongs to the transpeptidase family. FtsI subfamily.

It is found in the cell inner membrane. The catalysed reaction is Preferential cleavage: (Ac)2-L-Lys-D-Ala-|-D-Ala. Also transpeptidation of peptidyl-alanyl moieties that are N-acyl substituents of D-alanine.. It participates in cell wall biogenesis; peptidoglycan biosynthesis. In terms of biological role, catalyzes cross-linking of the peptidoglycan cell wall at the division septum. Binds penicillin. This chain is Probable peptidoglycan D,D-transpeptidase PbpC, found in Pseudomonas aeruginosa (strain ATCC 15692 / DSM 22644 / CIP 104116 / JCM 14847 / LMG 12228 / 1C / PRS 101 / PAO1).